The chain runs to 2692 residues: Thyroglobulin (2692 aa).

An N-terminal signal peptide occupies residues 1-19; sequence MALALWVFALLGSACLVSA. Iodotyrosine; alternate is present on Tyr-24. A Sulfotyrosine; alternate modification is found at Tyr-24. Tyr-24 bears the Thyroxine; alternate mark. A Triiodothyronine; alternate modification is found at Tyr-24. 3 Thyroglobulin type-1 domains span residues 31–92, 93–160, and 161–248; these read LRPC…PVAC, LSFC…PARC, and PGSC…LAGT. Cystine bridges form between Cys-34/Cys-52, Cys-63/Cys-70, Cys-72/Cys-92, Cys-96/Cys-120, Cys-131/Cys-138, Cys-140/Cys-160, Cys-164/Cys-183, and Cys-194/Cys-235. Tyr-108 carries the post-translational modification Iodotyrosine. An N-linked (GlcNAc...) asparagine glycan is attached at Asn-110. The residue at position 149 (Tyr-149) is an Iodotyrosine; alternate. Tyr-149 carries the post-translational modification Diiodotyrosine; alternate. The N-linked (GlcNAc...) asparagine glycan is linked to Asn-198. Tyr-234 and Tyr-258 each carry iodotyrosine. Positions 298–358 constitute a Thyroglobulin type-1 4 domain; sequence PTKCEVERFA…TRRPSEPLSC (61 aa). Intrachain disulfides connect Cys-301-Cys-319, Cys-330-Cys-336, Cys-338-Cys-358, Cys-364-Cys-621, Cys-408-Cys-609, Cys-632-Cys-637, Cys-639-Cys-659, Cys-663-Cys-688, and Cys-699-Cys-704. N-linked (GlcNAc...) asparagine glycosylation is found at Asn-485, Asn-497, and Asn-546. 3 consecutive Thyroglobulin type-1 domains span residues 606-659, 660-727, and 728-923; these read SQGC…RPRC, PTAC…PKQC, and PTPC…VPAC. Residue Tyr-705 is modified to Iodotyrosine; alternate. Tyr-705 carries the post-translational modification Thyroxine; alternate. Position 705 is a triiodothyronine; alternate (Tyr-705). Tyr-705 is modified (diiodotyrosine; alternate). Disulfide bonds link Cys-706-Cys-727, Cys-731-Cys-764, Cys-775-Cys-900, Cys-902-Cys-923, Cys-927-Cys-1033, Cys-1044-Cys-1051, Cys-1053-Cys-1079, Cys-1128-Cys-1147, Cys-1151-Cys-1171, Cys-1183-Cys-1190, Cys-1192-Cys-1212, Cys-1237-Cys-1287, and Cys-1262-Cys-1278. Asn-749 carries an N-linked (GlcNAc...) asparagine glycan. Iodotyrosine is present on Tyr-786. Asn-855 carries N-linked (GlcNAc...) asparagine glycosylation. Tyr-868 carries the iodotyrosine; alternate modification. Tyr-868 is modified (diiodotyrosine; alternate). Tyr-885 is subject to Diiodotyrosine. An N-linked (GlcNAc...) asparagine glycan is attached at Asn-949. Tyr-994 carries the post-translational modification Iodotyrosine; alternate. At Tyr-994 the chain carries Diiodotyrosine; alternate. Thyroglobulin type-1 domains follow at residues 1021-1079, 1088-1147, and 1148-1212; these read SGPL…PTPC, LSAW…SAPC, and PGLC…QPAC. The N-linked (GlcNAc...) asparagine glycan is linked to Asn-1142. At Tyr-1241 the chain carries Iodotyrosine. Thyroxine is present on Tyr-1241. Asn-1296 and Asn-1384 each carry an N-linked (GlcNAc...) asparagine glycan. Disulfide bonds link Cys-1372/Cys-1392, Cys-1395/Cys-1406, Cys-1409/Cys-1423, Cys-1426/Cys-1443, Cys-1447/Cys-1456, Cys-1476/Cys-1498, Cys-1535/Cys-1559, Cys-1539/Cys-1545, Cys-1571/Cys-1594, Cys-1656/Cys-1681, Cys-1660/Cys-1666, Cys-1665/Cys-1766, and Cys-1692/Cys-1709. Type II repeat units lie at residues 1389–1402, 1403–1419, and 1420–1436; these read PLGC…SYFQ, EEQC…EQTG, and SLAC…TSVG. The residue at position 1400 (Tyr-1400) is an Iodotyrosine; alternate. Tyr-1400 is subject to Diiodotyrosine; alternate. A Thyroglobulin type-1 11 domain is found at 1444 to 1498; it reads VTACQRDEAGLQCDQDGQYRASQRDRASGKAFCVDSEGRRLPWSETQAPLVDAQC. The stretch at 1535 to 1655 is one Type IIIA repeat; that stretch reads CLADCARDEA…GASLTEAHLF (121 aa). One copy of the Type IIIB repeat lies at 1656 to 1823; sequence CLLACDRDSC…LFSLQQAHLW (168 aa). Residue Asn-1800 is glycosylated (N-linked (GlcNAc...) asparagine). Cystine bridges form between Cys-1824/Cys-1850, Cys-1828/Cys-1835, Cys-1859/Cys-1870, Cys-1927/Cys-1955, Cys-1931/Cys-1937, Cys-1936/Cys-2007, Cys-1966/Cys-1979, Cys-2061/Cys-2085, Cys-2065/Cys-2071, and Cys-2094/Cys-2103. The stretch at 1824–1926 is one Type IIIA repeat; the sequence is CLSRCVQEPS…DKAISSGFFE (103 aa). One copy of the Type IIIB repeat lies at 1927–2060; the sequence is CERLCDVDPC…VGDFSAARER (134 aa). Asn-1944 is a glycosylation site (N-linked (GlcNAc...) asparagine). The stretch at 2061-2118 is one Type IIIA repeat; that stretch reads CLLECSRHQACLVTTLQTRPGAVRCMFYADTQSCTHSLQAQNCQLLLREEATHIYRKP. An Iodotyrosine modification is found at Tyr-2115. The cholinesterase-like (ChEL) stretch occupies residues 2119-2692; that stretch reads DIPLPGLGSS…PELASKSYSK (574 aa). Asn-2181 and Asn-2226 each carry an N-linked (GlcNAc...) asparagine glycan. The residue at position 2467 (Tyr-2467) is a Thyroxine. An Iodotyrosine; alternate modification is found at Tyr-2500. Tyr-2500 carries the thyroxine; alternate modification. Tyr-2500 is modified (triiodothyronine; alternate). Tyr-2500 carries the post-translational modification Diiodotyrosine; alternate. Iodotyrosine occurs at positions 2514 and 2544. Cys-2518 and Cys-2642 are disulfide-bonded. A Diiodotyrosine modification is found at Tyr-2624. Acidic residues predominate over residues 2658 to 2671; sequence EAEDGPLAESEEED. A disordered region spans residues 2658–2692; it reads EAEDGPLAESEEEDRPGLTEDLLGLPELASKSYSK. Iodotyrosine; alternate is present on Tyr-2690. The residue at position 2690 (Tyr-2690) is a Thyroxine; alternate. Tyr-2690 carries the post-translational modification Triiodothyronine; alternate. A Diiodotyrosine; alternate modification is found at Tyr-2690.

The protein belongs to the type-B carboxylesterase/lipase family. In terms of assembly, monomer. Homodimer (via ChEL region); occurs in the endoplasmic reticulum and is required for export to the Golgi apparatus. Homooligomer; disulfide-linked; stored in this form in the thyroid follicle lumen. In terms of processing, iodinated on tyrosine residues by TPO. There are 4 pairs of iodinated tyrosines used for coupling: acceptor Tyr-24 is coupled to donor Tyr-149 or Tyr-234, acceptor Tyr-2500 is coupled to donor Tyr-2467, acceptor Tyr-2690 in monomer 1 is coupled to donor Tyr-2690 in monomer 2 and acceptor Tyr-1241 in monomer 1 is coupled to donor Tyr-108 in monomer 2. Post-translationally, sulfated tyrosines are desulfated during iodination. Undergoes sequential proteolysis by cathepsins to release thyroxine (T4) and triiodothyronine (T3) hormones. In the thyroid follicle lumen, cross-linked TG (storage form) is solubilized by limited proteolysis mediated by cathepsins CTSB and/or CTSL. Partially cleaved TG is further processed by CTSK/cathepsin K and/or CTSL resulting in the release of T4. Following endocytosis, further processing occurs leading to the release of T3 and more T4 hormones. Expressed in thyroid epithelial cells.

Its subcellular location is the secreted. In terms of biological role, acts as a substrate for the production of iodinated thyroid hormones thyroxine (T4) and triiodothyronine (T3). The synthesis of T3 and T4 involves iodination of selected tyrosine residues of TG/thyroglobulin followed by their oxidative coupling. Following TG re-internalization and lysosomal-mediated proteolysis, T3 and T4 are released from the polypeptide backbone leading to their secretion into the bloodstream. One dimer produces 7 thyroid hormone molecules. The sequence is that of Thyroglobulin from Sus scrofa (Pig).